The sequence spans 1036 residues: Ephrin type-A receptor 6 (1036 aa).

The signal sequence occupies residues 1–22 (MGGCEVREFLLQFGFFLPLLTA). At 23–550 (WPGDCSHVSN…MAAEQGQILV (528 aa)) the chain is on the extracellular side. The 179-residue stretch at 34 to 212 (QVVLLDTTTV…FYKKCPFTVR (179 aa)) folds into the Eph LBD domain. Fibronectin type-III domains follow at residues 331–441 (PPSA…TDQD) and 442–537 (APSL…TGDE). Residues Asn343, Asn397, and Asn410 are each glycosylated (N-linked (GlcNAc...) asparagine). Residues 551 to 571 (IATAAVGGFTLLVILTLFFLI) traverse the membrane as a helical segment. Over 572–1036 (TGRCQWYIKA…MHIQEKGFHV (465 aa)) the chain is Cytoplasmic. Tyr606 and Tyr612 each carry phosphotyrosine; by autocatalysis. Residues 631–944 (IRIERVIGAG…RNPSALHTLV (314 aa)) form the Protein kinase domain. ATP is bound by residues 637-645 (IGAGEFGEV) and Lys663. The active-site Proton acceptor is the Asp798. 2 positions are modified to phosphotyrosine; by autocatalysis: Tyr831 and Tyr978. Residues 961–1025 (PLFVTVGDWL…VSSIQTLRLH (65 aa)) form the SAM domain. Positions 1034 to 1036 (FHV) match the PDZ-binding motif.

It belongs to the protein kinase superfamily. Tyr protein kinase family. Ephrin receptor subfamily. As to quaternary structure, heterotetramer upon binding of the ligand. The heterotetramer is composed of an ephrin dimer and a receptor dimer. Oligomerization is probably required to induce biological responses. Interacts (via SAM domain) with ANKS1A (via SAM domain). In terms of tissue distribution, expressed in brain and testis.

It localises to the membrane. It catalyses the reaction L-tyrosyl-[protein] + ATP = O-phospho-L-tyrosyl-[protein] + ADP + H(+). Functionally, receptor tyrosine kinase which binds promiscuously GPI-anchored ephrin-A family ligands residing on adjacent cells, leading to contact-dependent bidirectional signaling into neighboring cells. The signaling pathway downstream of the receptor is referred to as forward signaling while the signaling pathway downstream of the ephrin ligand is referred to as reverse signaling. The chain is Ephrin type-A receptor 6 (EPHA6) from Homo sapiens (Human).